Here is a 217-residue protein sequence, read N- to C-terminus: GRB2-related adapter protein (217 aa).

Residues 1–58 (MESVALYSFQATESDELAFNKGDTLKILNMEDDQNWYKAELRGAEGFVPKNYIRLKPH) form the SH3 1 domain. In terms of domain architecture, SH2 spans 60–152 (WYSGRISRQL…KRQVFLQDEE (93 aa)). The 60-residue stretch at 158–217 (PRACFAQAQFDFSAQDPSQLSFRRGDIIEVLERLDPSWWRGRLSGRIGFFPRSYVQPVHM) folds into the SH3 2 domain.

Belongs to the GRB2/sem-5/DRK family. In terms of assembly, associates through its SH2 domain with ligand-activated receptors for stem cell factor (KIT) and erythropoietin (EPOR). Also forms a stable complex with the Bcr-Abl oncoprotein. GRAP is associated with the Ras guanine nucleotide exchange factor SOS1, primarily through its N-terminal SH3 domain. Interacts with phosphorylated LAT upon TCR activation. Interacts with SHB.

It localises to the membrane. It is found in the synapse. Functionally, couples signals from receptor and cytoplasmic tyrosine kinases to the Ras signaling pathway. Plays a role in the inner ear and in hearing. The protein is GRB2-related adapter protein (GRAP) of Bos taurus (Bovine).